Reading from the N-terminus, the 236-residue chain is Small ribosomal subunit protein uS5 (236 aa).

The span at 1 to 10 shows a compositional bias: basic and acidic residues; it reads MTENNEKDIQ. The disordered stretch occupies residues 1–64; sequence MTENNEKDIQ…GRDGGREAEK (64 aa). Low complexity predominate over residues 11 to 27; it reads VTEAVAAPATETAAPAT. The segment covering 28 to 64 has biased composition (basic and acidic residues); sequence TDDRRGGARRGERGDRGQGRGDRGGRGGRDGGREAEK. Positions 67-130 constitute an S5 DRBM domain; it reads FVERVVTINR…EEAKKSFFRV (64 aa).

It belongs to the universal ribosomal protein uS5 family. As to quaternary structure, part of the 30S ribosomal subunit. Contacts proteins S4 and S8.

Functionally, with S4 and S12 plays an important role in translational accuracy. In terms of biological role, located at the back of the 30S subunit body where it stabilizes the conformation of the head with respect to the body. In Arthrobacter sp. (strain FB24), this protein is Small ribosomal subunit protein uS5.